The primary structure comprises 123 residues: UPF0482 protein YE2026 (123 aa).

The first 31 residues, methionine 1–alanine 31, serve as a signal peptide directing secretion. Residues glycine 47–aspartate 66 are disordered.

This sequence belongs to the UPF0482 family.

In Yersinia enterocolitica serotype O:8 / biotype 1B (strain NCTC 13174 / 8081), this protein is UPF0482 protein YE2026.